The primary structure comprises 313 residues: MSELTQLAQQEKKQTYNFNKLQKRLRRNVGNAIADFGMIEDGDKVMVCLSGGKDSYTLLDILLNLQQSAPIKFDIVAVNLDQKQPGFPEHVLPEYLESIGVDYKIVQENTYGIVKEKIPEGKTTCSLCSRLRRGILYRTATELGATKIALGHHRDDMLATLFLNMFYGGKIKSMPPKLISDDGKQIVIRPLAYCKEKDIEKYAIAKEFPIIPCNLCGSQPNLQRQVVKEMLNTWDRQYPGRLETMFSAMQNITLSHMCDPKLFDFKGIKHGQLIDGIEGDTAFDEERITPMQFEDEDQTDFSNKEMINFKEVN.

The PP-loop motif signature appears at 50–55 (SGGKDS). [4Fe-4S] cluster-binding residues include Cys-125, Cys-128, and Cys-216.

It belongs to the TtcA family. Homodimer. Mg(2+) is required as a cofactor. [4Fe-4S] cluster serves as cofactor.

Its subcellular location is the cytoplasm. The catalysed reaction is cytidine(32) in tRNA + S-sulfanyl-L-cysteinyl-[cysteine desulfurase] + AH2 + ATP = 2-thiocytidine(32) in tRNA + L-cysteinyl-[cysteine desulfurase] + A + AMP + diphosphate + H(+). The protein operates within tRNA modification. Functionally, catalyzes the ATP-dependent 2-thiolation of cytidine in position 32 of tRNA, to form 2-thiocytidine (s(2)C32). The sulfur atoms are provided by the cysteine/cysteine desulfurase (IscS) system. In Haemophilus influenzae (strain ATCC 51907 / DSM 11121 / KW20 / Rd), this protein is tRNA-cytidine(32) 2-sulfurtransferase.